Reading from the N-terminus, the 251-residue chain is Cell division protein ZapD (251 aa).

It belongs to the ZapD family. As to quaternary structure, interacts with FtsZ.

The protein localises to the cytoplasm. Functionally, cell division factor that enhances FtsZ-ring assembly. Directly interacts with FtsZ and promotes bundling of FtsZ protofilaments, with a reduction in FtsZ GTPase activity. The sequence is that of Cell division protein ZapD from Paraburkholderia xenovorans (strain LB400).